The following is a 125-amino-acid chain: Protein AC4 (125 aa).

It belongs to the geminiviridae protein AC4/C4 family.

Pathogenicity determinant. May act as a suppressor of RNA-mediated gene silencing, also known as post-transcriptional gene silencing (PTGS), a mechanism of plant viral defense that limits the accumulation of viral RNAs. The protein is Protein AC4 of Cucurbita moschata (Winter crookneck squash).